Reading from the N-terminus, the 106-residue chain is Replication protein A 14 kDa subunit B (106 aa).

Position 1 is an N-acetylmethionine (Met1).

This sequence belongs to the replication factor A protein 3 family. Component of the heterotrimeric canonical replication protein A complex (RPA).

It is found in the nucleus. As part of the replication protein A (RPA/RP-A), a single-stranded DNA-binding heterotrimeric complex, may play an essential role in DNA replication, recombination and repair. Binds and stabilizes single-stranded DNA intermediates, preventing complementary DNA reannealing and recruiting different proteins involved in DNA metabolism. The polypeptide is Replication protein A 14 kDa subunit B (RPA3B) (Arabidopsis thaliana (Mouse-ear cress)).